The primary structure comprises 217 residues: Probable GTP-binding protein EngB (217 aa).

The EngB-type G domain occupies 24–207 (SQPEICFAGR…HELIESWLIP (184 aa)). Residues 32–39 (GRSNAGKS), 59–63 (GRTQH), 81–84 (DLPG), 148–151 (TKCD), and 185–188 (LFSA) each bind GTP. Ser39 and Thr61 together coordinate Mg(2+).

The protein belongs to the TRAFAC class TrmE-Era-EngA-EngB-Septin-like GTPase superfamily. EngB GTPase family. Requires Mg(2+) as cofactor.

Necessary for normal cell division and for the maintenance of normal septation. This is Probable GTP-binding protein EngB from Paraburkholderia phytofirmans (strain DSM 17436 / LMG 22146 / PsJN) (Burkholderia phytofirmans).